Here is a 347-residue protein sequence, read N- to C-terminus: MITTTGLTKVYRSRGREVTALDGVDLHVREGEVYGVIGQSGAGKSSLIRCVNLLERPTSGTVTVAGQDLTALAGRGPRAGKELRTARSHIGMVFQHFNLLSSRTVQDNVELPLEILGVSGRERGRKALELLDLVGLTDKAKAYPAQLSGGQKQRVGIARALAGDPKVLLSDEATSALDPETTRSILQLLRDLNRQLGLTVLLITHEMNVVKSICDSAALMEKGRIVESGTVSELLGTPGSELASALFPVTGDASGDDRTVVDVTFHGEAATQPVISQLSRTYNIDISILGAAIDTVGGLQVGRMRIELPGRYEDNVVPIGFLREQGLQIDVVDKSDQESVLVKEGAK.

The region spanning Ile2–Phe247 is the ABC transporter domain. Gly38–Ser45 lines the ATP pocket.

This sequence belongs to the ABC transporter superfamily. Methionine importer (TC 3.A.1.24) family. As to quaternary structure, the complex is composed of two ATP-binding proteins (MetN), two transmembrane proteins (MetI) and a solute-binding protein (MetQ).

The protein resides in the cell membrane. The enzyme catalyses L-methionine(out) + ATP + H2O = L-methionine(in) + ADP + phosphate + H(+). It carries out the reaction D-methionine(out) + ATP + H2O = D-methionine(in) + ADP + phosphate + H(+). In terms of biological role, part of the ABC transporter complex MetNIQ involved in methionine import. Responsible for energy coupling to the transport system. The protein is Methionine import ATP-binding protein MetN of Streptomyces avermitilis (strain ATCC 31267 / DSM 46492 / JCM 5070 / NBRC 14893 / NCIMB 12804 / NRRL 8165 / MA-4680).